Here is a 497-residue protein sequence, read N- to C-terminus: Probable malate:quinone oxidoreductase (497 aa).

This sequence belongs to the MQO family. FAD serves as cofactor.

It carries out the reaction (S)-malate + a quinone = a quinol + oxaloacetate. The protein operates within carbohydrate metabolism; tricarboxylic acid cycle; oxaloacetate from (S)-malate (quinone route): step 1/1. In Flavobacterium johnsoniae (strain ATCC 17061 / DSM 2064 / JCM 8514 / BCRC 14874 / CCUG 350202 / NBRC 14942 / NCIMB 11054 / UW101) (Cytophaga johnsonae), this protein is Probable malate:quinone oxidoreductase.